The primary structure comprises 478 residues: Glycogen synthase (478 aa).

ADP-alpha-D-glucose is bound at residue K20.

Belongs to the glycosyltransferase 1 family. Bacterial/plant glycogen synthase subfamily.

It carries out the reaction [(1-&gt;4)-alpha-D-glucosyl](n) + ADP-alpha-D-glucose = [(1-&gt;4)-alpha-D-glucosyl](n+1) + ADP + H(+). It participates in glycan biosynthesis; glycogen biosynthesis. Its function is as follows. Synthesizes alpha-1,4-glucan chains using ADP-glucose. The sequence is that of Glycogen synthase from Cereibacter sphaeroides (strain ATCC 17025 / ATH 2.4.3) (Rhodobacter sphaeroides).